Reading from the N-terminus, the 297-residue chain is UDP-N-acetylenolpyruvoylglucosamine reductase (297 aa).

The 166-residue stretch at 27–192 folds into the FAD-binding PCMH-type domain; sequence IGGPADALLE…LRAAYRLHPG (166 aa). Arg170 is a catalytic residue. Ser220 (proton donor) is an active-site residue. Glu290 is a catalytic residue.

Belongs to the MurB family. It depends on FAD as a cofactor.

It is found in the cytoplasm. It carries out the reaction UDP-N-acetyl-alpha-D-muramate + NADP(+) = UDP-N-acetyl-3-O-(1-carboxyvinyl)-alpha-D-glucosamine + NADPH + H(+). The protein operates within cell wall biogenesis; peptidoglycan biosynthesis. Cell wall formation. This chain is UDP-N-acetylenolpyruvoylglucosamine reductase, found in Rubrobacter xylanophilus (strain DSM 9941 / JCM 11954 / NBRC 16129 / PRD-1).